Reading from the N-terminus, the 350-residue chain is Bifunctional UDP-glucose 4-epimerase and UDP-xylose 4-epimerase 1 (350 aa).

NAD(+) is bound by residues 15–17 (GFI), 36–40 (DNFDN), 67–68 (DL), phenylalanine 89, and lysine 93. Serine 133 lines the substrate pocket. Residue tyrosine 157 is the Proton acceptor of the active site. NAD(+) is bound by residues lysine 161 and tyrosine 185.

It belongs to the NAD(P)-dependent epimerase/dehydratase family. It depends on NAD(+) as a cofactor.

The catalysed reaction is UDP-alpha-D-glucose = UDP-alpha-D-galactose. It carries out the reaction UDP-beta-L-arabinopyranose = UDP-alpha-D-xylose. Its pathway is carbohydrate metabolism; galactose metabolism. It functions in the pathway nucleotide-sugar biosynthesis; UDP-L-arabinose biosynthesis; UDP-L-arabinose from UDP-alpha-D-xylose: step 1/1. It participates in cell wall biogenesis; cell wall polysaccharide biosynthesis. Its activity is regulated as follows. Inhibited by Hg(2+). Functionally, catalyzes the interconversion between UDP-glucose and UDP-galactose and the interconversion between UDP-arabinose and UDP-xylose. The sequence is that of Bifunctional UDP-glucose 4-epimerase and UDP-xylose 4-epimerase 1 from Pisum sativum (Garden pea).